A 240-amino-acid polypeptide reads, in one-letter code: MFYSGLLTEGGRKETDRREAASLRQQRRMKQAVQFIHKDSADLLPLDGLKKLGSSKDTQPHNILQRRLMETNLSKLRSGRVPWASKTNKLNQAKSEGLKKSEEDDMILVSCQCAGRDVKAVVDTGCLHNLISLACVDRLGLKEHVKSHKHEGEKLSLPRHLKVVDQIEHLVITLGSLRLDCPAAVVDDNEKNLSLGLQTLRSLKCIINLDKHRLIMGKTDKEEIPFVETVSLNEDNTSEA.

The sequence is that of Nuclear receptor-interacting protein 3 (NRIP3) from Pongo abelii (Sumatran orangutan).